Reading from the N-terminus, the 314-residue chain is Dihydroorotate dehydrogenase (fumarate) (314 aa).

Residues Lys-46, 70-74, and Asn-130 contribute to the substrate site; that span reads NSMGL. Residue Lys-46 forms a Glycyl lysine isopeptide (Lys-Gly) (interchain with G-Cter in ubiquitin) linkage. 46–47 is an FMN binding site; the sequence is KS. Asn-130 lines the FMN pocket. Residue Cys-133 is the Nucleophile of the active site. FMN-binding residues include Lys-167 and Ile-195. Position 196-197 (196-197) interacts with substrate; the sequence is NS. Residues Gly-224, 252-253, and 274-275 each bind FMN; these read GG and GT.

The protein belongs to the dihydroorotate dehydrogenase family. Type 1 subfamily. Homodimer. FMN is required as a cofactor.

The protein resides in the cytoplasm. It carries out the reaction (S)-dihydroorotate + fumarate = orotate + succinate. The protein operates within pyrimidine metabolism; UMP biosynthesis via de novo pathway. Its activity is regulated as follows. The activity is independent of the presence of oxygen. Functionally, catalyzes the conversion of dihydroorotate to orotate with fumarate as the electron acceptor. Molecular oxygen can replace fumarate in vitro. Does not use oxaloacetate or NAD or NADP as electron acceptors. The chain is Dihydroorotate dehydrogenase (fumarate) (URA1) from Saccharomyces cerevisiae (strain ATCC 204508 / S288c) (Baker's yeast).